The chain runs to 101 residues: Small ribosomal subunit protein uS14 (101 aa).

This sequence belongs to the universal ribosomal protein uS14 family. In terms of assembly, part of the 30S ribosomal subunit. Contacts proteins S3 and S10.

Binds 16S rRNA, required for the assembly of 30S particles and may also be responsible for determining the conformation of the 16S rRNA at the A site. The polypeptide is Small ribosomal subunit protein uS14 (Shewanella putrefaciens (strain CN-32 / ATCC BAA-453)).